A 296-amino-acid chain; its full sequence is MEVTAQLVKELRDRTGAGMLDCKKALEDTGGNIEEAITWLREKGITKAAKKSDRVAAEGLVGLVTKGDKQIIFEVNSETDFVAKNKQFKDLMATVGETLINNDPKTVEDVLKVSVNGEPLETVIVHAIATIGEKITLRRFKTVHLKTDQSLGVYLHSNNRIATVLIFSGKIDETIGKQLAMHVSAMRPQFISRDDISVDFLNSEKPILTAEAKNDPKNAGKPDNILEKMVEGRLNKQLAEISFLDQVFVVNPDQKISDVIKANNVNVVDMIRYEVGEGIEKEELDFASEVMAQVLK.

The tract at residues threonine 79–valine 82 is involved in Mg(2+) ion dislocation from EF-Tu.

It belongs to the EF-Ts family.

The protein resides in the cytoplasm. In terms of biological role, associates with the EF-Tu.GDP complex and induces the exchange of GDP to GTP. It remains bound to the aminoacyl-tRNA.EF-Tu.GTP complex up to the GTP hydrolysis stage on the ribosome. This Spiroplasma citri protein is Elongation factor Ts (tsf).